We begin with the raw amino-acid sequence, 108 residues long: ATP-dependent Clp protease adapter protein ClpS (108 aa).

This sequence belongs to the ClpS family. As to quaternary structure, binds to the N-terminal domain of the chaperone ClpA.

In terms of biological role, involved in the modulation of the specificity of the ClpAP-mediated ATP-dependent protein degradation. The chain is ATP-dependent Clp protease adapter protein ClpS from Ralstonia pickettii (strain 12J).